Here is a 520-residue protein sequence, read N- to C-terminus: AMP-binding domain-containing enzyme iboA (520 aa).

Residue 180-191 (LTSGSTSGSPKV) coordinates ATP. The short motif at 397–447 (DGNFHTGDLFEKQLDGSYLFRGRGDDWIKSEDSRFIDTKAIEEKINDVCSD) is the FACS element.

Belongs to the ATP-dependent AMP-binding enzyme family. The cofactor is Mg(2+).

It participates in secondary metabolite biosynthesis. In terms of biological role, AMP-binding domain-containing enzyme; part of the gene cluster that mediates the biosynthesis of the psychoactive metabolites ibotenic acid and muscimol. The first committed step is glutamate hydroxylation by the 2-oxoglutarate-dependent dioxygenase iboH, and the last step is decarboxylation of ibotenic acid to muscimol by the decarboxylase iboD. The order of the intermediate reactions is somewhat ambiguous. IboA likely activates the carboxylic acid at position 5 to introduce an amide bond, and the flavin monooxygenase iboF generates the N-O bond. There are several options for the latter step. One option is that iboF directly hydroxylates the amide nitrogen formed by iboA to produce a hydroxamic acid species. Another option is that iboF hydroxylates an external N-containing compound, whose resulting N-O bond is subsequently introduced into the hydroxyglutamate scaffold. The paralogous PLP-dependent cystathionine gamma-synthase-like enzymes iboG1 and iboG2 are likely involved in substitution of the OH group at position 3 by the O-N moiety. The first cyclic intermediate is most probably tricholomic acid which is likely desaturated to ibotenic acid by the cytochrome P450 monooxygenase iboC. The chain is AMP-binding domain-containing enzyme iboA from Amanita muscaria (strain Koide BX008).